The following is a 159-amino-acid chain: Ribosomal RNA large subunit methyltransferase H (159 aa).

Residues leucine 76, glycine 108, and 127–132 (FSNMTF) contribute to the S-adenosyl-L-methionine site.

This sequence belongs to the RNA methyltransferase RlmH family. Homodimer.

The protein localises to the cytoplasm. It catalyses the reaction pseudouridine(1915) in 23S rRNA + S-adenosyl-L-methionine = N(3)-methylpseudouridine(1915) in 23S rRNA + S-adenosyl-L-homocysteine + H(+). In terms of biological role, specifically methylates the pseudouridine at position 1915 (m3Psi1915) in 23S rRNA. The sequence is that of Ribosomal RNA large subunit methyltransferase H from Staphylococcus epidermidis (strain ATCC 35984 / DSM 28319 / BCRC 17069 / CCUG 31568 / BM 3577 / RP62A).